Consider the following 535-residue polypeptide: MSVHYTLNLRVFWPLVTGLCTALVCLYHVLRGSGGARAEPADGVDGGFPLLKVAVLLLLSYVLLRCRHAVRQRFLPGSPRLEGHAAFSSRHFREPGLSILLESYYEHEVRLSPHVLGHSKAHVSRIVGELVRAGRARGSPGLIPGGALALAFRGDFIQVGSAYEQHKIRRPDSFDVLVPLRLPPLVALEPRSLGEEPALAPAFRGCFLCALKAPPSPSGASGGHWLRDCKPFADAFCVDVRGRRHLSATLVLRWFQSHLQRSLATVRYSLEGRCRVTLTPGGLEQPPTLHILPCRTDYGCCRLSMAVRLIPAVHLGDGVFLVAPPPPPLPSAPLLELPEGLRAEALWGVNTARQEQKLLSWLQERAAPGACYLKCLQLLKALRDLGARGLDSAAATQWGRILSSYVLKTVLLAVLLRKGAPGQGWDEEHLGRCLEELVQFLRDCLLRRHTLFHCVLGPGGAAAEVGPLPKALREAAPVDLLAAFDGHARELAAARLLSTWQRLPQLLRAYGGPRYLARCPPPRSQRTQGFLEGEP.

The first 38 residues, 1–38 (MSVHYTLNLRVFWPLVTGLCTALVCLYHVLRGSGGARA), serve as a signal peptide directing secretion. Over 39-43 (EPADG) the chain is Extracellular. A helical transmembrane segment spans residues 44-64 (VDGGFPLLKVAVLLLLSYVLL). Topologically, residues 65-535 (RCRHAVRQRF…RTQGFLEGEP (471 aa)) are cytoplasmic. S139 bears the Phosphoserine mark.

It belongs to the ITPRIP family.

Its subcellular location is the membrane. The sequence is that of Inositol 1,4,5-trisphosphate receptor-interacting protein-like 2 (ITPRIPL2) from Homo sapiens (Human).